The chain runs to 458 residues: Elongation factor 1-alpha (458 aa).

Gly-2 carries the n,N,N-trimethylglycine; by EFM7 modification. N6,N6-dimethyllysine; by EFM7; alternate is present on Lys-3. Lys-3 carries the post-translational modification N6-methyllysine; by EFM7; alternate. Residues 5–240 (KSHINVVVIG…DAIEQPSRPT (236 aa)) enclose the tr-type G domain. Positions 14 to 21 (GHVDSGKS) are G1. Ser-18 bears the Phosphoserine mark. 2 residues coordinate GTP: Ser-21 and Thr-22. N6-methyllysine; by EFM1 is present on Lys-30. The interval 70–74 (GITID) is G2. Phosphothreonine is present on Thr-72. Position 79 is an N6,N6,N6-trimethyllysine; by EFM5 (Lys-79). Thr-82 carries the phosphothreonine modification. The interval 91–94 (DAPG) is G3. GTP contacts are provided by Asn-153, Lys-154, and Asp-156. Residues 153-156 (NKMD) are G4. The residue at position 163 (Ser-163) is a Phosphoserine. The GTP site is built by Ser-192, Gly-193, and Trp-194. The interval 192–194 (SGW) is G5. Residues Lys-224, Lys-242, and Lys-253 each participate in a glycyl lysine isopeptide (Lys-Gly) (interchain with G-Cter in ubiquitin) cross-link. Thr-259 carries the phosphothreonine modification. Residue Lys-271 forms a Glycyl lysine isopeptide (Lys-Gly) (interchain with G-Cter in ubiquitin) linkage. Residue Ser-289 is modified to Phosphoserine. Residue Lys-316 is modified to N6,N6-dimethyllysine; by EFM4; alternate. Lys-316 is subject to N6-methyllysine; by EFM4; alternate. Lys-390 bears the N6-methyllysine; by EFM6 mark. Lys-393 participates in a covalent cross-link: Glycyl lysine isopeptide (Lys-Gly) (interchain with G-Cter in ubiquitin). The residue at position 414 (Ser-414) is a Phosphoserine. Thr-430 carries the post-translational modification Phosphothreonine. A Glycyl lysine isopeptide (Lys-Gly) (interchain with G-Cter in ubiquitin) cross-link involves residue Lys-437. Residue Lys-458 is modified to Lysine methyl ester.

The protein belongs to the TRAFAC class translation factor GTPase superfamily. Classic translation factor GTPase family. EF-Tu/EF-1A subfamily. As to quaternary structure, the eukaryotic elongation factor 1 complex (eEF1) is probably a heterohexamer. Two trimeric complexes, each composed of eEF1A (TEF1 or TEF2), eEF1Balpha (EFB1) and eEF1Bgamma (CAM1 or TEF4), are probably dimerized via the eF1Bgamma subunits. Interacts with eEF1Balpha; the interaction is direct. Interacts with GCN2 (via C-terminus); this interaction is direct, occurs in amino acid-repleted cells, may be stabilized in a ribosome-dependent manner, reduces GCN2-mediated eIF-2-alpha phosphorylation and is lost in amino acid-starved cells and by uncharged tRNAs. Interacts with CEX1. Interacts with elongation factor 3 (YEF3 or HEF3). Interacts with NAP1. Interacts with SRV2. Interacts with chaperone ZPR1; the interaction is required for its proper folding. Binds to actin and forms a ternary complex with BNI1 and profilin. Interacts with the proteasome, probably via RPT1. Associates with ribosomes. In terms of processing, S-thiolated in response to oxidative stress, probably inhibiting the protein and causing a reduction in protein synthesis. Glutaminylated at Glu-45. An L-glutamine is linked to Glu-45 via the alpha amino group. This glutaminylation is yeast-specific and not essential for the normal functions of eEF1A. However, eEF1A glutaminylation slightly reduced growth under antibiotic-induced translational stress conditions.

The protein localises to the cytoplasm. It is found in the cytoskeleton. It participates in protein biosynthesis; polypeptide chain elongation. Its activity is regulated as follows. Inhibited by narciclasine. Its function is as follows. GTP-binding component of the eukaryotic elongation factor 1 complex (eEF1). In its active GTP-bound form, binds to and delivers aminoacyl-tRNA to the A-site of ribosomes during protein biosynthesis. In the presence of a correct codon-anticodon match between the aminoacyl-tRNA and the A-site codon of the ribosome-bound mRNA, the ribosome acts as a GTPase activator and the GTP is hydrolyzed. The inactive GDP-bound form leaves the ribosome and must be recycled by its guanine nucleotide exchange factor (GEF) (eEF1B subcomplex) before binding another molecule of aminoacyl-tRNA. Required for nuclear export of aminoacyl-tRNAs. May also be involved in translational quality control by targeting cotranslationally damaged proteins to the proteasome. Also exhibits actin filament-binding and -bundling activities and is involved in cytoskeleton organization. Plays a role as a negative regulator of GCN2 kinase activity by inhibiting GCN2-mediated eIF-2-alpha phosphorylation in amino acid-repleted cells. The chain is Elongation factor 1-alpha (TEF1) from Saccharomyces cerevisiae (strain ATCC 204508 / S288c) (Baker's yeast).